The sequence spans 385 residues: Nod factor hydrolase protein 1 (385 aa).

Positions 1–21 (MANFLKLKQFLTLVLILLALA) are cleaved as a signal peptide. The GH18 domain occupies 36–385 (RVKGIYWIEN…TASKAWRPES (350 aa)). N-linked (GlcNAc...) asparagine glycans are attached at residues Asn115 and Asn134. Glu153 (proton donor) is an active-site residue. N-linked (GlcNAc...) asparagine glycans are attached at residues Asn233 and Asn247.

Belongs to the glycosyl hydrolase 18 family. Chitinase class V subfamily.

Symbiotic enzyme that hydrolytically inactivates Nod factors (NFs) with a C16:2 acyl chain produced by the microsymbiont Sinorhizobium meliloti. NFs are lipo-chitooligosaccharide signaling molecules produced by nitrogen-fixing rhizobia to initiate nodulation (symbiosis) on the roots of legumes. Controls NF hydrolysis at the stage of root hair infection. Involved in the regulation of growth and branching of mature nodules. Modulates NF levels and signaling to complete transition of infected nodules to functional nitrogen-fixing organs. Lacks chitinase activity in vitro toward glycol chitin, carboxymethyl-chitin, colloidal chitin, and the chitin oligosaccharides (N-acetylglucosamine) (GlcNAc)6 and (GlcNAc)5. The chain is Nod factor hydrolase protein 1 from Medicago truncatula (Barrel medic).